A 128-amino-acid chain; its full sequence is Ribonuclease pancreatic (128 aa).

Positions 1-15 (SESSAKKFERQHMDS) are enriched in basic and acidic residues. The segment at 1 to 28 (SESSAKKFERQHMDSRGSPSTNPNYCNE) is disordered. Residues K7 and R10 each contribute to the substrate site. Catalysis depends on H12, which acts as the Proton acceptor. 4 cysteine pairs are disulfide-bonded: C26–C84, C40–C95, C58–C110, and C65–C72. A glycan (N-linked (GlcNAc...) asparagine) is linked at N34. Substrate-binding positions include 41 to 45 (KPVNT), K66, and R85. Residue H119 is the Proton donor of the active site.

It belongs to the pancreatic ribonuclease family. In terms of assembly, monomer. Interacts with and forms tight 1:1 complexes with RNH1. Dimerization of two such complexes may occur. Interaction with RNH1 inhibits this protein. Pancreas.

It localises to the secreted. The catalysed reaction is an [RNA] containing cytidine + H2O = an [RNA]-3'-cytidine-3'-phosphate + a 5'-hydroxy-ribonucleotide-3'-[RNA].. The enzyme catalyses an [RNA] containing uridine + H2O = an [RNA]-3'-uridine-3'-phosphate + a 5'-hydroxy-ribonucleotide-3'-[RNA].. Functionally, endonuclease that catalyzes the cleavage of RNA on the 3' side of pyrimidine nucleotides. Acts on single-stranded and double-stranded RNA. The chain is Ribonuclease pancreatic (RNASE1) from Myocastor coypus (Coypu).